A 287-amino-acid chain; its full sequence is Telomere repeat-binding factor 5 (287 aa).

The HTH myb-type domain occupies 1–62; the sequence is MGNQKLKWTA…WRNLSVPPGT (62 aa). The segment at residues 28 to 58 is a DNA-binding region (H-T-H motif); sequence WKNILRDPEFADQLIHRSNIDLKDKWRNLSV. The disordered stretch occupies residues 58 to 107; it reads VPPGTQSLTNKARPAKVKEEGDTPAADANDAVTIPRPIPTIPPPPGRRTL. Residues 93-103 are compositionally biased toward pro residues; that stretch reads RPIPTIPPPPG. Residues 119 to 193 enclose the H15 domain; sequence NAPRYDGVIF…SIQNFYKIPD (75 aa). A coiled-coil region spans residues 233–259; the sequence is AACKVVEAENKIDVAKLAAEEFEKMTK.

The protein belongs to the histone H1/H5 family. SMH subfamily.

The protein resides in the nucleus. It is found in the chromosome. Binds preferentially double-stranded telomeric repeats. The chain is Telomere repeat-binding factor 5 from Arabidopsis thaliana (Mouse-ear cress).